The chain runs to 160 residues: Phosphopantetheine adenylyltransferase (160 aa).

Residue threonine 9 participates in substrate binding. Residues 9 to 10 and histidine 17 contribute to the ATP site; that span reads TF. 3 residues coordinate substrate: lysine 41, leucine 73, and arginine 87. Residues 88-90, glutamate 98, and 123-129 contribute to the ATP site; these read GLR and FSYTSSS.

It belongs to the bacterial CoaD family. Homohexamer. It depends on Mg(2+) as a cofactor.

It localises to the cytoplasm. The enzyme catalyses (R)-4'-phosphopantetheine + ATP + H(+) = 3'-dephospho-CoA + diphosphate. Its pathway is cofactor biosynthesis; coenzyme A biosynthesis; CoA from (R)-pantothenate: step 4/5. Its function is as follows. Reversibly transfers an adenylyl group from ATP to 4'-phosphopantetheine, yielding dephospho-CoA (dPCoA) and pyrophosphate. The sequence is that of Phosphopantetheine adenylyltransferase from Opitutus terrae (strain DSM 11246 / JCM 15787 / PB90-1).